Reading from the N-terminus, the 365-residue chain is Probable galacturonosyltransferase-like 10 (365 aa).

Topologically, residues 1-10 are cytoplasmic; it reads MMSGSRLASR. Residues 11–31 traverse the membrane as a helical; Signal-anchor for type II membrane protein segment; it reads LIIIFSIISTSFFTVESIRLF. Topologically, residues 32 to 365 are lumenal; that stretch reads PDSFDDASSD…LQYNQELEIL (334 aa). Asn-209 carries N-linked (GlcNAc...) asparagine glycosylation.

Belongs to the glycosyltransferase 8 family.

It is found in the golgi apparatus membrane. It functions in the pathway glycan metabolism; pectin biosynthesis. In terms of biological role, may be involved in pectin and/or xylans biosynthesis in cell walls. This chain is Probable galacturonosyltransferase-like 10 (GATL10), found in Arabidopsis thaliana (Mouse-ear cress).